A 219-amino-acid chain; its full sequence is MTQDELKKAVGWAALQYVQPGTIVGVGTGSTAAHFIDALGTMKGQIEGAVSSSDASTEKLKGLGIHVFDLNEVDSLGIYVDGADEINGHMQMIKGGGAALTREKIIASVAEKFICIADASKQVDILGKFPLPVEVIPMARSAVARQLVKLGGRPEYRQNVVTDNGNVILDVYGMEILDPIALENAINAIPGVVTVGLFANRGADVALIGTPDGVKTIVK.

Substrate is bound by residues 28–31 (TGST), 81–84 (DGAD), and 94–97 (KGGG). Glutamate 103 acts as the Proton acceptor in catalysis. Lysine 121 is a substrate binding site.

Belongs to the ribose 5-phosphate isomerase family. As to quaternary structure, homodimer.

The enzyme catalyses aldehydo-D-ribose 5-phosphate = D-ribulose 5-phosphate. Its pathway is carbohydrate degradation; pentose phosphate pathway; D-ribose 5-phosphate from D-ribulose 5-phosphate (non-oxidative stage): step 1/1. Catalyzes the reversible conversion of ribose-5-phosphate to ribulose 5-phosphate. This is Ribose-5-phosphate isomerase A from Salmonella choleraesuis (strain SC-B67).